Reading from the N-terminus, the 283-residue chain is MDTVSLTGKELAAALNADTKQRAEALTAGGVAARLALIVANDDPASAWYVNSLRKAAERLGIACERIDLGADATADGIRAELRERSADPAFDAIMLQTPLPASVALDDVSSAIAADKDVDGVSPLSLGLLAAGLAGFVPATAQAVVELLKHHEIALSGRHVAVVGRSNVVGKPLAQLLLAENATVTVCHSRTTDLAAITSTADVVVAAVGRAGLVTGDHVRAGAVVVDVGTNEAEDGGIVGDVDAESVRGKAAGLSPVPGGVGPVTTALLMRHVVEAAERHRG.

NADP(+)-binding positions include 165–167 (GRS), serine 190, and threonine 231.

The protein belongs to the tetrahydrofolate dehydrogenase/cyclohydrolase family. Homodimer.

It carries out the reaction (6R)-5,10-methylene-5,6,7,8-tetrahydrofolate + NADP(+) = (6R)-5,10-methenyltetrahydrofolate + NADPH. It catalyses the reaction (6R)-5,10-methenyltetrahydrofolate + H2O = (6R)-10-formyltetrahydrofolate + H(+). The protein operates within one-carbon metabolism; tetrahydrofolate interconversion. Functionally, catalyzes the oxidation of 5,10-methylenetetrahydrofolate to 5,10-methenyltetrahydrofolate and then the hydrolysis of 5,10-methenyltetrahydrofolate to 10-formyltetrahydrofolate. The chain is Bifunctional protein FolD from Nocardia farcinica (strain IFM 10152).